A 72-amino-acid polypeptide reads, in one-letter code: MAKKDVIELEGTVSEALPNAMFKVKLENGHEILCHISGKLRMNFIRILEGDKVNVELSPYDLTRGRITWRKK.

The S1-like domain maps to 1–72 (MAKKDVIELE…TRGRITWRKK (72 aa)).

Belongs to the IF-1 family. As to quaternary structure, component of the 30S ribosomal translation pre-initiation complex which assembles on the 30S ribosome in the order IF-2 and IF-3, IF-1 and N-formylmethionyl-tRNA(fMet); mRNA recruitment can occur at any time during PIC assembly.

It is found in the cytoplasm. Functionally, one of the essential components for the initiation of protein synthesis. Stabilizes the binding of IF-2 and IF-3 on the 30S subunit to which N-formylmethionyl-tRNA(fMet) subsequently binds. Helps modulate mRNA selection, yielding the 30S pre-initiation complex (PIC). Upon addition of the 50S ribosomal subunit IF-1, IF-2 and IF-3 are released leaving the mature 70S translation initiation complex. The polypeptide is Translation initiation factor IF-1 (Clostridioides difficile (strain 630) (Peptoclostridium difficile)).